The chain runs to 103 residues: Vesicle-associated membrane protein 3 (103 aa).

Residues 1–25 form a disordered region; sequence MSTGVPSGSSAATGSNRRLQQTQNQ. The Cytoplasmic portion of the chain corresponds to 1–81; that stretch reads MSTGVPSGSS…KRKYWWKNCK (81 aa). The v-SNARE coiled-coil homology domain occupies 18–78; sequence RLQQTQNQVD…AKLKRKYWWK (61 aa). Glycyl lysine isopeptide (Lys-Gly) (interchain with G-Cter in ubiquitin) cross-links involve residues Lys-70, Lys-72, and Lys-81. Residues 82 to 102 traverse the membrane as a helical; Anchor for type IV membrane protein segment; sequence MWAIGISVLVIIVIIIIVWCV. A topological domain (vesicular) is located at residue Ser-103.

The protein belongs to the synaptobrevin family. In terms of assembly, interacts with POPDC1 (via the C-terminus cytoplasmic tail). Interacts with BCAP31; involved in VAMP3 export from the endoplasmic reticulum. Interacts with BAIAP3; this interaction is increased in the presence of calcium. Interacts with PICALM. In terms of processing, ubiquitinated by RNF167 at Lys-70, Lys-72 and Lys-81, regulating the recycling endosome pathway. Post-translationally, (Microbial infection) Targeted and hydrolyzed by C.botulinum neurotoxin type D (BoNT/D, botD) which hydrolyzes the 46-Lys-|-Leu-47 bond and probably inhibits neurotransmitter release. (Microbial infection) Targeted and hydrolyzed by C.botulinum neurotoxin type F (BoNT/F, botF) which hydrolyzes the 45-Gln-|-Lys-46 bond and probably inhibits neurotransmitter release. In terms of processing, (Microbial infection) Targeted and hydrolyzed by C.tetani toxin (tetX) which hydrolyzes the 63-Gln-|-Phe-64 bond and probably inhibits neurotransmitter release. In terms of tissue distribution, ubiquitous.

It is found in the early endosome membrane. It localises to the recycling endosome membrane. Its subcellular location is the synapse. The protein localises to the synaptosome. Its function is as follows. SNARE involved in vesicular transport from the late endosomes to the trans-Golgi network. In Rattus norvegicus (Rat), this protein is Vesicle-associated membrane protein 3 (Vamp3).